The sequence spans 535 residues: GMP synthase [glutamine-hydrolyzing] (535 aa).

The Glutamine amidotransferase type-1 domain maps to 20 to 210 (PVLVVDFGAQ…LHRCAALPND (191 aa)). The active-site Nucleophile is the C97. Active-site residues include H184 and E186. Residues 211-409 (WDASSIIEDQ…LGLPDEIVWR (199 aa)) form the GMPS ATP-PPase domain. 238–244 (SGGVDSA) provides a ligand contact to ATP.

As to quaternary structure, homodimer.

It catalyses the reaction XMP + L-glutamine + ATP + H2O = GMP + L-glutamate + AMP + diphosphate + 2 H(+). The protein operates within purine metabolism; GMP biosynthesis; GMP from XMP (L-Gln route): step 1/1. Catalyzes the synthesis of GMP from XMP. This is GMP synthase [glutamine-hydrolyzing] from Bifidobacterium longum (strain NCC 2705).